Consider the following 743-residue polypeptide: Catalase-peroxidase (743 aa).

Residues 1 to 21 (MSENHETVVSELNEESGGGCP) form a disordered region. The tryptophyl-tyrosyl-methioninium (Trp-Tyr) (with M-257) cross-link spans 108–231 (WHSAGTYRIS…LGAVQMGLIY (124 aa)). The active-site Proton acceptor is His-109. A cross-link (tryptophyl-tyrosyl-methioninium (Tyr-Met) (with W-108)) is located at residues 231–257 (YVNPEGPNGTPDPLAAARDIRETFRRM). Heme b is bound at residue His-272. The segment at 275–296 (GKTHGAGDPDNVGPEPEGAPLE) is disordered.

The protein belongs to the peroxidase family. Peroxidase/catalase subfamily. As to quaternary structure, homodimer or homotetramer. The cofactor is heme b. In terms of processing, formation of the three residue Trp-Tyr-Met cross-link is important for the catalase, but not the peroxidase activity of the enzyme.

It catalyses the reaction H2O2 + AH2 = A + 2 H2O. The catalysed reaction is 2 H2O2 = O2 + 2 H2O. Functionally, bifunctional enzyme with both catalase and broad-spectrum peroxidase activity. This chain is Catalase-peroxidase, found in Parafrankia sp. (strain EAN1pec).